Consider the following 176-residue polypeptide: ATP-dependent protease subunit HslV (176 aa).

The active site involves Thr-5. Residues Ala-161, Cys-164, and Thr-167 each contribute to the Na(+) site.

The protein belongs to the peptidase T1B family. HslV subfamily. A double ring-shaped homohexamer of HslV is capped on each side by a ring-shaped HslU homohexamer. The assembly of the HslU/HslV complex is dependent on binding of ATP.

It localises to the cytoplasm. It carries out the reaction ATP-dependent cleavage of peptide bonds with broad specificity.. With respect to regulation, allosterically activated by HslU binding. Functionally, protease subunit of a proteasome-like degradation complex believed to be a general protein degrading machinery. This Pelotomaculum thermopropionicum (strain DSM 13744 / JCM 10971 / SI) protein is ATP-dependent protease subunit HslV.